Consider the following 501-residue polypeptide: Lysine--tRNA ligase (501 aa).

Residues Glu402 and Glu409 each coordinate Mg(2+).

Belongs to the class-II aminoacyl-tRNA synthetase family. As to quaternary structure, homodimer. Mg(2+) is required as a cofactor.

It localises to the cytoplasm. The catalysed reaction is tRNA(Lys) + L-lysine + ATP = L-lysyl-tRNA(Lys) + AMP + diphosphate. The polypeptide is Lysine--tRNA ligase (lysS) (Helicobacter pylori (strain J99 / ATCC 700824) (Campylobacter pylori J99)).